A 144-amino-acid chain; its full sequence is Maximins 6/H10 (144 aa).

Positions 1–18 (MNFKYIVAVSFLIASAYA) are cleaved as a signal peptide. Residues 19–43 (RSVKNDEQSLSQRDVLDEESLREIR) constitute a propeptide that is removed on maturation. N70 is modified (asparagine amide). Positions 74–123 (TAEDHEVMKRLEAVMRDLDSLDHPEEASERETRGFNQEEIANRFTKKEKR) are excised as a propeptide. A Leucine amide modification is found at L143.

Belongs to the bombinin family. As to expression, expressed by the skin glands.

The protein localises to the secreted. Its function is as follows. Maximin-6 shows antimicrobial activity against bacteria and against the fungus C.albicans. It has little hemolytic activity. Maximin-H10 shows antimicrobial activity against bacteria and against the fungus C.albicans. Shows strong hemolytic activity. This is Maximins 6/H10 from Bombina maxima (Giant fire-bellied toad).